Here is a 478-residue protein sequence, read N- to C-terminus: MPEAWAPVRPETPPAPELLYWNAELADELGLDAGQTDKGELARLFSGADIPEGAQPIAQAYAGHQFGGLSPSLGDGRALLLGEVTDRNGQRRDIALKGSGQTPFSRRGDGKAAVGPMLRELIVGEAMQALGIPTTRALAVTTTGEPVYRERPLPGAVLTRVAASHLRVGTFQYFAIRGETAMLNKLADYTIARHYPQLAGRDGRHLALLAAVAERQAALIARWMHAGFIHGVMNTDNMALSGETIDYGPCAFMDAHYPGTVFSSIDHQGRYAYGNQPAIAQWNLARFAETLLPLISPDDPAAAVPAATEIVEGFEDLYQRRWLEQARRKLGLEGERDDDQALADDWLMLLAAHGVDHTLAWRYLADEAEGKGERLAALFPSPDALTPWLKQWHARHVPRTRRPPDIAAAMRRESPLYIPRNHLVEEALDAASERGDMGPTLKLLEALHQPFAERDGLDRYAQPAAAELAEGYRTFCGT.

Gly74, Gly76, Arg77, Lys97, Asp109, Gly110, Arg160, and Arg167 together coordinate ATP. Asp236 acts as the Proton acceptor in catalysis. Residues Asn237 and Asp246 each contribute to the Mg(2+) site. Residue Asp246 participates in ATP binding.

Belongs to the SELO family. Mg(2+) is required as a cofactor. Requires Mn(2+) as cofactor.

It carries out the reaction L-seryl-[protein] + ATP = 3-O-(5'-adenylyl)-L-seryl-[protein] + diphosphate. The catalysed reaction is L-threonyl-[protein] + ATP = 3-O-(5'-adenylyl)-L-threonyl-[protein] + diphosphate. It catalyses the reaction L-tyrosyl-[protein] + ATP = O-(5'-adenylyl)-L-tyrosyl-[protein] + diphosphate. The enzyme catalyses L-histidyl-[protein] + UTP = N(tele)-(5'-uridylyl)-L-histidyl-[protein] + diphosphate. It carries out the reaction L-seryl-[protein] + UTP = O-(5'-uridylyl)-L-seryl-[protein] + diphosphate. The catalysed reaction is L-tyrosyl-[protein] + UTP = O-(5'-uridylyl)-L-tyrosyl-[protein] + diphosphate. Its function is as follows. Nucleotidyltransferase involved in the post-translational modification of proteins. It can catalyze the addition of adenosine monophosphate (AMP) or uridine monophosphate (UMP) to a protein, resulting in modifications known as AMPylation and UMPylation. This chain is Protein nucleotidyltransferase YdiU, found in Chromobacterium violaceum (strain ATCC 12472 / DSM 30191 / JCM 1249 / CCUG 213 / NBRC 12614 / NCIMB 9131 / NCTC 9757 / MK).